The primary structure comprises 277 residues: Phosphoenolpyruvate synthase regulatory protein (277 aa).

An ADP-binding site is contributed by 157 to 164 (GVSRCGKT).

It belongs to the pyruvate, phosphate/water dikinase regulatory protein family. PSRP subfamily.

The catalysed reaction is [pyruvate, water dikinase] + ADP = [pyruvate, water dikinase]-phosphate + AMP + H(+). It carries out the reaction [pyruvate, water dikinase]-phosphate + phosphate + H(+) = [pyruvate, water dikinase] + diphosphate. Bifunctional serine/threonine kinase and phosphorylase involved in the regulation of the phosphoenolpyruvate synthase (PEPS) by catalyzing its phosphorylation/dephosphorylation. In Escherichia coli O6:K15:H31 (strain 536 / UPEC), this protein is Phosphoenolpyruvate synthase regulatory protein.